The chain runs to 183 residues: Ribosome-recycling factor (183 aa).

This sequence belongs to the RRF family.

The protein resides in the cytoplasm. In terms of biological role, responsible for the release of ribosomes from messenger RNA at the termination of protein biosynthesis. May increase the efficiency of translation by recycling ribosomes from one round of translation to another. The polypeptide is Ribosome-recycling factor (Christiangramia forsetii (strain DSM 17595 / CGMCC 1.15422 / KT0803) (Gramella forsetii)).